A 390-amino-acid polypeptide reads, in one-letter code: S-adenosylmethionine synthase (390 aa).

Histidine 15 contacts ATP. Position 17 (aspartate 17) interacts with Mg(2+). Glutamate 43 provides a ligand contact to K(+). Residues glutamate 56 and glutamine 99 each contribute to the L-methionine site. The tract at residues 99-109 (QSPDINQGVDR) is flexible loop. ATP is bound by residues 164 to 166 (DAK), 230 to 231 (RF), aspartate 239, 245 to 246 (RK), alanine 262, and lysine 266. Aspartate 239 serves as a coordination point for L-methionine. Lysine 270 contacts L-methionine.

It belongs to the AdoMet synthase family. As to quaternary structure, homotetramer; dimer of dimers. The cofactor is Mg(2+). K(+) serves as cofactor.

Its subcellular location is the cytoplasm. It carries out the reaction L-methionine + ATP + H2O = S-adenosyl-L-methionine + phosphate + diphosphate. Its pathway is amino-acid biosynthesis; S-adenosyl-L-methionine biosynthesis; S-adenosyl-L-methionine from L-methionine: step 1/1. Its function is as follows. Catalyzes the formation of S-adenosylmethionine (AdoMet) from methionine and ATP. The overall synthetic reaction is composed of two sequential steps, AdoMet formation and the subsequent tripolyphosphate hydrolysis which occurs prior to release of AdoMet from the enzyme. The polypeptide is S-adenosylmethionine synthase (Photorhabdus laumondii subsp. laumondii (strain DSM 15139 / CIP 105565 / TT01) (Photorhabdus luminescens subsp. laumondii)).